The chain runs to 182 residues: A-type ATP synthase subunit E (182 aa).

The protein belongs to the V-ATPase E subunit family. In terms of assembly, has multiple subunits with at least A(3), B(3), C, D, E, F, H, I and proteolipid K(x).

It localises to the cell membrane. Functionally, component of the A-type ATP synthase that produces ATP from ADP in the presence of a proton gradient across the membrane. This is A-type ATP synthase subunit E from Picrophilus torridus (strain ATCC 700027 / DSM 9790 / JCM 10055 / NBRC 100828 / KAW 2/3).